Reading from the N-terminus, the 106-residue chain is Malonate decarboxylase acyl carrier protein (106 aa).

The residue at position 28 (Ser-28) is an O-(phosphoribosyl dephospho-coenzyme A)serine.

Belongs to the MdcC family. Covalently binds the prosthetic group of malonate decarboxylase.

The protein resides in the cytoplasm. In terms of biological role, subunit of malonate decarboxylase, it is an acyl carrier protein to which acetyl and malonyl thioester residues are bound via a 2'-(5''-phosphoribosyl)-3'-dephospho-CoA prosthetic group and turn over during the catalytic mechanism. The protein is Malonate decarboxylase acyl carrier protein of Stenotrophomonas maltophilia (strain K279a).